The chain runs to 360 residues: DNA replication and repair protein RecF (360 aa).

Residue 30–37 participates in ATP binding; sequence GHNGSGKT.

It belongs to the RecF family.

It localises to the cytoplasm. In terms of biological role, the RecF protein is involved in DNA metabolism; it is required for DNA replication and normal SOS inducibility. RecF binds preferentially to single-stranded, linear DNA. It also seems to bind ATP. The chain is DNA replication and repair protein RecF from Actinobacillus pleuropneumoniae serotype 5b (strain L20).